We begin with the raw amino-acid sequence, 402 residues long: Putative F-box/kelch-repeat protein At1g61540 (402 aa).

An F-box domain is found at 24 to 70; the sequence is PISIMSLPYDLLLNCFSLVSRLYYPTLSLVSKTFRSIITSRELYEIR. Kelch repeat units follow at residues 135–189, 191–240, and 246–293; these read NIYK…CEVD, KIYI…EVKS, and KIYM…VVDN.

The sequence is that of Putative F-box/kelch-repeat protein At1g61540 from Arabidopsis thaliana (Mouse-ear cress).